The primary structure comprises 428 residues: GTPase Obg (428 aa).

In terms of domain architecture, Obg spans 1 to 158; sequence MFIDIAKVFI…LSIVLELKLL (158 aa). The OBG-type G domain occupies 159–331; it reads ADVGLLGFPN…VIKEAARMLK (173 aa). GTP is bound by residues 165–172, 190–194, 212–215, 282–285, and 312–314; these read GFPNVGKS, FTTLK, DIPG, NKSD, and SAA. The Mg(2+) site is built by Ser172 and Thr192. The OCT domain maps to 345 to 428; it reads MYIPEEKKFT…LNDFEFEYLL (84 aa).

This sequence belongs to the TRAFAC class OBG-HflX-like GTPase superfamily. OBG GTPase family. Monomer. It depends on Mg(2+) as a cofactor.

It is found in the cytoplasm. Its function is as follows. An essential GTPase which binds GTP, GDP and possibly (p)ppGpp with moderate affinity, with high nucleotide exchange rates and a fairly low GTP hydrolysis rate. Plays a role in control of the cell cycle, stress response, ribosome biogenesis and in those bacteria that undergo differentiation, in morphogenesis control. The sequence is that of GTPase Obg from Clostridium botulinum (strain Alaska E43 / Type E3).